We begin with the raw amino-acid sequence, 454 residues long: Bifunctional protein GlmU (454 aa).

The segment at 1-233 is pyrophosphorylase; the sequence is MQATPRPLAL…EAETIGINSR (233 aa). UDP-N-acetyl-alpha-D-glucosamine-binding positions include 13-16, lysine 27, glutamine 80, 85-86, 108-110, glycine 145, glutamate 159, asparagine 174, and asparagine 231; these read LAAG, GT, and YGD. Position 110 (aspartate 110) interacts with Mg(2+). Asparagine 231 lines the Mg(2+) pocket. Positions 234–254 are linker; it reads AELVRAEAQFQSQRRAALIEA. The N-acetyltransferase stretch occupies residues 255-454; it reads GVTMQAPDSV…KAIKDAKSKD (200 aa). UDP-N-acetyl-alpha-D-glucosamine is bound by residues arginine 320 and lysine 338. Catalysis depends on histidine 350, which acts as the Proton acceptor. The UDP-N-acetyl-alpha-D-glucosamine site is built by tyrosine 353 and asparagine 364. Acetyl-CoA is bound by residues alanine 367, 373–374, serine 392, serine 410, and arginine 427; that span reads NY.

This sequence in the N-terminal section; belongs to the N-acetylglucosamine-1-phosphate uridyltransferase family. The protein in the C-terminal section; belongs to the transferase hexapeptide repeat family. As to quaternary structure, homotrimer. Requires Mg(2+) as cofactor.

It localises to the cytoplasm. It catalyses the reaction alpha-D-glucosamine 1-phosphate + acetyl-CoA = N-acetyl-alpha-D-glucosamine 1-phosphate + CoA + H(+). The enzyme catalyses N-acetyl-alpha-D-glucosamine 1-phosphate + UTP + H(+) = UDP-N-acetyl-alpha-D-glucosamine + diphosphate. It participates in nucleotide-sugar biosynthesis; UDP-N-acetyl-alpha-D-glucosamine biosynthesis; N-acetyl-alpha-D-glucosamine 1-phosphate from alpha-D-glucosamine 6-phosphate (route II): step 2/2. It functions in the pathway nucleotide-sugar biosynthesis; UDP-N-acetyl-alpha-D-glucosamine biosynthesis; UDP-N-acetyl-alpha-D-glucosamine from N-acetyl-alpha-D-glucosamine 1-phosphate: step 1/1. The protein operates within bacterial outer membrane biogenesis; LPS lipid A biosynthesis. In terms of biological role, catalyzes the last two sequential reactions in the de novo biosynthetic pathway for UDP-N-acetylglucosamine (UDP-GlcNAc). The C-terminal domain catalyzes the transfer of acetyl group from acetyl coenzyme A to glucosamine-1-phosphate (GlcN-1-P) to produce N-acetylglucosamine-1-phosphate (GlcNAc-1-P), which is converted into UDP-GlcNAc by the transfer of uridine 5-monophosphate (from uridine 5-triphosphate), a reaction catalyzed by the N-terminal domain. The chain is Bifunctional protein GlmU from Jannaschia sp. (strain CCS1).